The primary structure comprises 502 residues: Probable RNA exonuclease C9B6.11c (502 aa).

Residues 338 to 379 (SELEEKNASTKTENDSNEDDKEECQSSSTSSVPESTASTPKK) form a disordered region. Basic and acidic residues predominate over residues 341–351 (EEKNASTKTEN). Residues 363 to 376 (SSSTSSVPESTAST) are compositionally biased toward low complexity.

This sequence belongs to the CCR4/nocturin family.

It localises to the cytoplasm. It is found in the nucleus. The protein is Probable RNA exonuclease C9B6.11c of Schizosaccharomyces pombe (strain 972 / ATCC 24843) (Fission yeast).